A 179-amino-acid polypeptide reads, in one-letter code: UPF0227 protein Ssed_2836 (179 aa).

Belongs to the UPF0227 family.

This is UPF0227 protein Ssed_2836 from Shewanella sediminis (strain HAW-EB3).